A 314-amino-acid polypeptide reads, in one-letter code: Olfactory receptor 52H1 (314 aa).

Over 1–32 (MIIFNLSSYNPGPFILVGIPGLEQFHVWIGIP) the chain is Extracellular. Asn5 carries N-linked (GlcNAc...) asparagine glycosylation. Residues 33 to 53 (FCIIYIVAVVGNCILLYLIVV) form a helical membrane-spanning segment. Residues 54–59 (EHSLHE) are Cytoplasmic-facing. A helical transmembrane segment spans residues 60–80 (PMFFFLSMLAMTDLILSTAGV). Over 81 to 101 (PKALSIFWLGAREITFPGCLT) the chain is Extracellular. A disulfide bridge connects residues Cys99 and Cys181. Residues 102–122 (QMFFLHYNFVLDSAILMAMAF) form a helical membrane-spanning segment. The Cytoplasmic portion of the chain corresponds to 123 to 149 (DHYVAICSPLRYTTILTPKTIIKSAMG). Residues 150–170 (ISFRSFCIILPDVFLLTCLPF) form a helical membrane-spanning segment. Topologically, residues 171–197 (CRTRIIPHTYCEHIGVAQLACADISIN) are extracellular. The helical transmembrane segment at 198-218 (FWYGFCVPIMTVISDVILIAV) threads the bilayer. Residues 219 to 242 (SYAHILCAVFGLPSQDACQKALGT) lie on the Cytoplasmic side of the membrane. The helical transmembrane segment at 243-263 (CGSHVCVILMFYTPAFFSILA) threads the bilayer. At 264 to 275 (HRFGHNVSRTFH) the chain is on the extracellular side. N-linked (GlcNAc...) asparagine glycosylation occurs at Asn269. Residues 276 to 296 (IMFANLYIVIPPALNPMVYGV) traverse the membrane as a helical segment. The Cytoplasmic segment spans residues 297-314 (KTKQIRDKVILLFSKGTG).

The protein belongs to the G-protein coupled receptor 1 family.

Its subcellular location is the membrane. In terms of biological role, odorant receptor. The protein is Olfactory receptor 52H1 (OR52H1) of Homo sapiens (Human).